Reading from the N-terminus, the 215-residue chain is RNA pyrophosphohydrolase (215 aa).

Residues 6–149 form the Nudix hydrolase domain; it reads GFRPNVGIIL…KRDVYQLALT (144 aa). The Nudix box motif lies at 38 to 59; the sequence is GGIKYGETPMQAMYRELHEETG.

Belongs to the Nudix hydrolase family. RppH subfamily. A divalent metal cation is required as a cofactor.

Accelerates the degradation of transcripts by removing pyrophosphate from the 5'-end of triphosphorylated RNA, leading to a more labile monophosphorylated state that can stimulate subsequent ribonuclease cleavage. The sequence is that of RNA pyrophosphohydrolase from Burkholderia multivorans (strain ATCC 17616 / 249).